The following is an 82-amino-acid chain: Ferredoxin (82 aa).

The 29-residue stretch at Lys-3–Glu-31 folds into the 4Fe-4S ferredoxin-type domain. [4Fe-4S] cluster is bound by residues Cys-12, Cys-15, Cys-18, and Cys-62.

Requires [4Fe-4S] cluster as cofactor.

In terms of biological role, ferredoxins are iron-sulfur proteins that transfer electrons in a wide variety of metabolic reactions. This ferredoxin may act as a phosphodonor to cytochrome P450 BioI. The protein is Ferredoxin (fer) of Bacillus subtilis (strain 168).